A 322-amino-acid chain; its full sequence is MKKIAVLTSGGDSPGMNAAVRAVVRTAIYNEIEVYGVYHGYQGLLNDDIHKLELGSVGDTIQRGGTFLYSARCPEFKEQEVRKVAIENLRKRGIEGLVVIGGDGSYRGAQRISEECKEIQTIGIPGTIDNDINGTDFTIGFDTALNTIIGLVDKIRDTASSHARTFIIEAMGRDCGDLALWAGLSVGAETIVVPEVKTDIKEIADKIEQGIKRGKKHSIVLVAEGCMTAQDCQKELSQYINVDNRVSVLGHVQRGGSPTGADRVLASRLGGYAVDLLMQGETAKGVGIKNNKIVATSFDEIFDGKDHKFDYSLYELANKLSI.

ATP is bound at residue glycine 11. An ADP-binding site is contributed by arginine 21–arginine 25. ATP contacts are provided by residues arginine 72 to cysteine 73 and glycine 102 to serine 105. Residue aspartate 103 participates in Mg(2+) binding. Residue threonine 127–aspartate 129 participates in substrate binding. Catalysis depends on aspartate 129, which acts as the Proton acceptor. Arginine 156 serves as a coordination point for ADP. Substrate is bound by residues arginine 164 and methionine 171–arginine 173. ADP-binding positions include glycine 187 to glutamate 189, arginine 213, and lysine 215 to histidine 217. Substrate contacts are provided by residues glutamate 224, arginine 245, and histidine 251–arginine 254.

Belongs to the phosphofructokinase type A (PFKA) family. ATP-dependent PFK group I subfamily. Prokaryotic clade 'B1' sub-subfamily. In terms of assembly, homotetramer. The cofactor is Mg(2+).

The protein resides in the cytoplasm. It catalyses the reaction beta-D-fructose 6-phosphate + ATP = beta-D-fructose 1,6-bisphosphate + ADP + H(+). The protein operates within carbohydrate degradation; glycolysis; D-glyceraldehyde 3-phosphate and glycerone phosphate from D-glucose: step 3/4. With respect to regulation, allosterically activated by ADP and other diphosphonucleosides, and allosterically inhibited by phosphoenolpyruvate. Functionally, catalyzes the phosphorylation of D-fructose 6-phosphate to fructose 1,6-bisphosphate by ATP, the first committing step of glycolysis. The polypeptide is ATP-dependent 6-phosphofructokinase (Staphylococcus aureus (strain JH1)).